A 357-amino-acid chain; its full sequence is Protein pelota homolog (357 aa).

The protein belongs to the eukaryotic release factor 1 family. Pelota subfamily. In terms of assembly, monomer. A divalent metal cation is required as a cofactor.

The protein resides in the cytoplasm. In terms of biological role, may function in recognizing stalled ribosomes, interact with stem-loop structures in stalled mRNA molecules, and effect endonucleolytic cleavage of the mRNA. May play a role in the release non-functional ribosomes and degradation of damaged mRNAs. Has endoribonuclease activity. The sequence is that of Protein pelota homolog from Methanocella arvoryzae (strain DSM 22066 / NBRC 105507 / MRE50).